Reading from the N-terminus, the 244-residue chain is Phosphoadenosine 5'-phosphosulfate reductase (244 aa).

C239 functions as the Nucleophile; cysteine thiosulfonate intermediate in the catalytic mechanism.

Belongs to the PAPS reductase family. CysH subfamily.

Its subcellular location is the cytoplasm. The catalysed reaction is [thioredoxin]-disulfide + sulfite + adenosine 3',5'-bisphosphate + 2 H(+) = [thioredoxin]-dithiol + 3'-phosphoadenylyl sulfate. The protein operates within sulfur metabolism; hydrogen sulfide biosynthesis; sulfite from sulfate: step 3/3. Catalyzes the formation of sulfite from phosphoadenosine 5'-phosphosulfate (PAPS) using thioredoxin as an electron donor. This Enterobacter sp. (strain 638) protein is Phosphoadenosine 5'-phosphosulfate reductase.